The sequence spans 341 residues: Ketol-acid reductoisomerase (NADP(+)) (341 aa).

A KARI N-terminal Rossmann domain is found at 2–181 (AKVYYNGDAN…GATRAGVLET (180 aa)). NADP(+)-binding positions include 25-28 (YGSQ), arginine 48, serine 52, and 82-85 (DEKQ). Histidine 107 is a catalytic residue. An NADP(+)-binding site is contributed by glycine 133. The KARI C-terminal knotted domain occupies 182 to 327 (TFKEETETDL…RELRSMMPFV (146 aa)). Positions 190, 194, 226, and 230 each coordinate Mg(2+). Serine 251 contacts substrate.

Belongs to the ketol-acid reductoisomerase family. Requires Mg(2+) as cofactor.

It carries out the reaction (2R)-2,3-dihydroxy-3-methylbutanoate + NADP(+) = (2S)-2-acetolactate + NADPH + H(+). The catalysed reaction is (2R,3R)-2,3-dihydroxy-3-methylpentanoate + NADP(+) = (S)-2-ethyl-2-hydroxy-3-oxobutanoate + NADPH + H(+). Its pathway is amino-acid biosynthesis; L-isoleucine biosynthesis; L-isoleucine from 2-oxobutanoate: step 2/4. The protein operates within amino-acid biosynthesis; L-valine biosynthesis; L-valine from pyruvate: step 2/4. Functionally, involved in the biosynthesis of branched-chain amino acids (BCAA). Catalyzes an alkyl-migration followed by a ketol-acid reduction of (S)-2-acetolactate (S2AL) to yield (R)-2,3-dihydroxy-isovalerate. In the isomerase reaction, S2AL is rearranged via a Mg-dependent methyl migration to produce 3-hydroxy-3-methyl-2-ketobutyrate (HMKB). In the reductase reaction, this 2-ketoacid undergoes a metal-dependent reduction by NADPH to yield (R)-2,3-dihydroxy-isovalerate. This is Ketol-acid reductoisomerase (NADP(+)) from Geobacillus sp. (strain WCH70).